Consider the following 276-residue polypeptide: ATP synthase subunit a 2 (276 aa).

The next 5 helical transmembrane spans lie at 45-65, 105-125, 154-173, 226-246, and 247-267; these read AVHVDSLGWSIALGALFVWLF, VIAPLALTVFCWIFLMNLMDL, VNVTLGMSLSVFFLIIYYSI, LLFILIALMPFWAQWALSVPW, and AIFHILVIVLQAFIFMMLTIV.

The protein belongs to the ATPase A chain family. As to quaternary structure, F-type ATPases have 2 components, CF(1) - the catalytic core - and CF(0) - the membrane proton channel. CF(1) has five subunits: alpha(3), beta(3), gamma(1), delta(1), epsilon(1). CF(0) has three main subunits: a(1), b(2) and c(9-12). The alpha and beta chains form an alternating ring which encloses part of the gamma chain. CF(1) is attached to CF(0) by a central stalk formed by the gamma and epsilon chains, while a peripheral stalk is formed by the delta and b chains.

It localises to the cell inner membrane. In terms of biological role, key component of the proton channel; it plays a direct role in the translocation of protons across the membrane. In Hahella chejuensis (strain KCTC 2396), this protein is ATP synthase subunit a 2.